The primary structure comprises 66 residues: uncharacterized protein (66 aa).

This is an uncharacterized protein from Methanocaldococcus jannaschii (strain ATCC 43067 / DSM 2661 / JAL-1 / JCM 10045 / NBRC 100440) (Methanococcus jannaschii).